The sequence spans 448 residues: Dual specificity mitogen-activated protein kinase kinase 5 (448 aa).

Positions 18-25 (VIRIKIPN) are interaction with MAPK7. Residues 18-109 (VIRIKIPNSG…EPLQIFPRAC (92 aa)) form the PB1 domain. The segment at 64 to 68 (DEDGD) is interaction with MAP3K2/MAP3K3. The segment at 116–144 (NIHGLKVNTRAGPSQHTSPVVSDSLPSNS) is disordered. The segment at 117-131 (IHGLKVNTRAGPSQH) is interaction with MAPK7. Residues 126–144 (AGPSQHTSPVVSDSLPSNS) are compositionally biased toward polar residues. Positions 166–419 (IRYRDTLGHG…PEELMGHPFI (254 aa)) constitute a Protein kinase domain. Residues 172 to 180 (LGHGNGGTV) and Lys-195 each bind ATP. The active-site Proton acceptor is Asp-283. Ser-311 bears the Phosphoserine mark. Thr-315 is subject to Phosphothreonine.

Belongs to the protein kinase superfamily. STE Ser/Thr protein kinase family. MAP kinase kinase subfamily. Interacts with PARD6A, MAP3K3 and MAPK7. Forms a complex with SQSTM1 and PRKCZ or PRKCI. It depends on Mg(2+) as a cofactor. Activated by phosphorylation on Ser/Thr by MAP kinase kinase kinases.

The protein localises to the cytoplasm. The enzyme catalyses L-seryl-[protein] + ATP = O-phospho-L-seryl-[protein] + ADP + H(+). The catalysed reaction is L-threonyl-[protein] + ATP = O-phospho-L-threonyl-[protein] + ADP + H(+). It carries out the reaction L-tyrosyl-[protein] + ATP = O-phospho-L-tyrosyl-[protein] + ADP + H(+). Functionally, acts as a scaffold for the formation of a ternary MAP3K2/MAP3K3-MAP3K5-MAPK7 signaling complex. Activation of this pathway appears to play a critical role in protecting cells from stress-induced apoptosis, neuronal survival and cardiac development and angiogenesis. As part of the MAPK/ERK signaling pathway, acts as a negative regulator of apoptosis in cardiomyocytes via promotion of STUB1/CHIP-mediated ubiquitination and degradation of ICER-type isoforms of CREM. In Mus musculus (Mouse), this protein is Dual specificity mitogen-activated protein kinase kinase 5 (Map2k5).